We begin with the raw amino-acid sequence, 299 residues long: 4-diphosphocytidyl-2-C-methyl-D-erythritol kinase (299 aa).

Residue Lys18 is part of the active site. 104–114 (PIASGIGGGSS) lines the ATP pocket. The active site involves Asp146.

Belongs to the GHMP kinase family. IspE subfamily.

It carries out the reaction 4-CDP-2-C-methyl-D-erythritol + ATP = 4-CDP-2-C-methyl-D-erythritol 2-phosphate + ADP + H(+). It functions in the pathway isoprenoid biosynthesis; isopentenyl diphosphate biosynthesis via DXP pathway; isopentenyl diphosphate from 1-deoxy-D-xylulose 5-phosphate: step 3/6. Catalyzes the phosphorylation of the position 2 hydroxy group of 4-diphosphocytidyl-2C-methyl-D-erythritol. In Brucella abortus biovar 1 (strain 9-941), this protein is 4-diphosphocytidyl-2-C-methyl-D-erythritol kinase.